The primary structure comprises 253 residues: Aminoglycoside nucleotidyltransferase (4') (253 aa).

The segment at 1–127 (MNGPIIMTRE…KVYQTAKSVE (127 aa)) is N-terminal domain. Residues serine 39, arginine 42, serine 49, aspartate 50, and glutamate 52 each coordinate ATP. Mg(2+)-binding residues include aspartate 50 and glutamate 52. Neomycin B is bound by residues glutamate 52 and glutamate 67. Residues glutamate 67, lysine 74, glutamate 76, glutamate 141, and glutamate 145 each coordinate kanamycin A. Residues 128–241 (AQTFHDAICA…NGIQEWTERH (114 aa)) form a C-terminal domain region. Positions 145, 149, and 187 each coordinate ATP. Glutamate 145 provides a ligand contact to Mg(2+). The active-site Proton acceptor is the glutamate 145.

As to quaternary structure, homodimer. Requires Mg(2+) as cofactor.

It catalyses the reaction amikacin + ATP = 4'-adenylylamikacin + diphosphate. It carries out the reaction kanamycin A + ATP = 4'-adenylylkanamycin A + diphosphate. The enzyme catalyses neomycin B + ATP = 4'-adenylylneomycin B + diphosphate. The catalysed reaction is paromomycin + ATP = 4'-adenylylparomomycin + diphosphate. It catalyses the reaction ribostamycin + ATP = 4'-adenylylribostamycin + diphosphate. It carries out the reaction tobramycin + ATP = 4'-adenylyltobramycin + diphosphate. The enzyme catalyses kanamycin A + CTP = 4'-cytidylylkanamycin A + diphosphate. The catalysed reaction is kanamycin A + GTP = 4'-guanylylkanamycin A + diphosphate. It catalyses the reaction kanamycin A + ITP = 4'-inosinylylkanamycin A + diphosphate. It carries out the reaction dTTP + kanamycin A = 4'-thymidylylkanamycin A + diphosphate. The enzyme catalyses kanamycin A + UTP = 4'-uridylylkanamycin A + diphosphate. The catalysed reaction is kanamycin A + dATP = 4'-(2'-deoxyadenylyl)kanamycin A + diphosphate. It catalyses the reaction kanamycin A + dCTP = 4'-(2'-deoxycytidylyl)kanamycin A + diphosphate. It carries out the reaction kanamycin A + dGTP = 4'-(2'-deoxyguanylyl)kanamycin A + diphosphate. The enzyme catalyses dUTP + kanamycin A = 4'-(2'-deoxyuridylyl)kanamycin A + diphosphate. The catalysed reaction is amikacin + GTP = 4'-guanylylamikacin + diphosphate. It catalyses the reaction amikacin + ITP = 4'-inosinylylamikacin + diphosphate. It carries out the reaction amikacin + CTP = 4'-cytidylylamikacin + diphosphate. The enzyme catalyses amikacin + UTP = 4'-uridylylamikacin + diphosphate. The catalysed reaction is amikacin + dTTP = 4'-thymidylylamikacin + diphosphate. Its function is as follows. Inactivates aminoglycoside antibiotics such as kanamycin by catalyzing the transfer of a nucleotidyl group from a wide variety of nucleoside triphosphates ((d)ATP, (d)CTP, (d)GTP, ITP, TTP and (d)UTP) to the 4'-hydroxyl group of the aminoglycoside. In vitro, antibiotics without the 4'-hydroxyl but possessing a 4''-hydroxyl group (e.g. sisomicin and gentamicin) are also modifed but with poor specificity. The 3' position of the NTP ribose ring does not tolerate large substitutions (e.g. ddATP) and dNTPs and TTP are better substrates than their NTP counterparts. A short (2.35 Angstrom) hydrogen bond initially facilitates tight binding of the substrate (between Glu-52 and antibiotic) that is subsequently disrupted by the assembly of the active ternary complex. This enables the release of products post-catalysis, a 'catch and release' mechanism. This Staphylococcus aureus protein is Aminoglycoside nucleotidyltransferase (4') (knt).